Reading from the N-terminus, the 466-residue chain is Light-independent protochlorophyllide reductase subunit N (466 aa).

[4Fe-4S] cluster contacts are provided by Cys-23, Cys-48, and Cys-108.

It belongs to the BchN/ChlN family. In terms of assembly, protochlorophyllide reductase is composed of three subunits; ChlL, ChlN and ChlB. Forms a heterotetramer of two ChlB and two ChlN subunits. Requires [4Fe-4S] cluster as cofactor.

It carries out the reaction chlorophyllide a + oxidized 2[4Fe-4S]-[ferredoxin] + 2 ADP + 2 phosphate = protochlorophyllide a + reduced 2[4Fe-4S]-[ferredoxin] + 2 ATP + 2 H2O. It functions in the pathway porphyrin-containing compound metabolism; chlorophyll biosynthesis (light-independent). Its function is as follows. Component of the dark-operative protochlorophyllide reductase (DPOR) that uses Mg-ATP and reduced ferredoxin to reduce ring D of protochlorophyllide (Pchlide) to form chlorophyllide a (Chlide). This reaction is light-independent. The NB-protein (ChlN-ChlB) is the catalytic component of the complex. The protein is Light-independent protochlorophyllide reductase subunit N of Synechococcus elongatus (strain ATCC 33912 / PCC 7942 / FACHB-805) (Anacystis nidulans R2).